A 152-amino-acid chain; its full sequence is ADP-ribose glycohydrolase OARD1 (152 aa).

At Ala-2 the chain carries N-acetylalanine. The Macro domain maps to 2–152 (ASSLNEDPEG…TDIKITVYTL (151 aa)). Phosphoserine is present on Ser-4. Leu-21 provides a ligand contact to substrate. Catalysis depends on Lys-84, which acts as the Nucleophile. Substrate is bound by residues 119-125 (RIGCGLD) and Leu-152. Asp-125 functions as the Proton acceptor in the catalytic mechanism.

In terms of tissue distribution, ubiquitous.

The protein resides in the nucleus. The protein localises to the nucleoplasm. Its subcellular location is the nucleolus. It is found in the chromosome. The enzyme catalyses 2''-O-acetyl-ADP-D-ribose + H2O = ADP-D-ribose + acetate + H(+). It catalyses the reaction 5-O-(ADP-D-ribosyl)-L-glutamyl-[protein] + H2O = L-glutamyl-[protein] + ADP-D-ribose + H(+). It carries out the reaction alpha-NAD(+) + H2O = ADP-D-ribose + nicotinamide + H(+). With respect to regulation, subject to competitive inhibition by the product ADP-ribose. Functionally, ADP-ribose glycohydrolase that hydrolyzes ADP-ribose and acts on different substrates, such as proteins ADP-ribosylated on glutamate and O-acetyl-ADP-D-ribose. Specifically acts as a glutamate mono-ADP-ribosylhydrolase by mediating the removal of mono-ADP-ribose attached to glutamate residues on proteins. Does not act on poly-ADP-ribosylated proteins: the poly-ADP-ribose chain of poly-ADP-ribosylated glutamate residues must by hydrolyzed into mono-ADP-ribosylated glutamate by PARG to become a substrate for OARD1. Deacetylates O-acetyl-ADP ribose, a signaling molecule generated by the deacetylation of acetylated lysine residues in histones and other proteins. Catalyzes the deacylation of O-acetyl-ADP-ribose, O-propionyl-ADP-ribose and O-butyryl-ADP-ribose, yielding ADP-ribose plus acetate, propionate and butyrate, respectively. The polypeptide is ADP-ribose glycohydrolase OARD1 (Homo sapiens (Human)).